A 368-amino-acid polypeptide reads, in one-letter code: C2H2 type master regulator of conidiophore development BrlA (368 aa).

The C2H2-type 1; degenerate zinc finger occupies 268 to 292 (CKCDYPGCHKAFRRNEHLKRHKQTF). The C2H2-type 2 zinc finger occupies 300 to 323 (FSCEFCGKDQFNRQDNLNNHRKLH). The tract at residues 338 to 368 (AAVPIIEQEERSRKRRAPPKSKSADKRVDDY) is disordered. Positions 359–368 (KSADKRVDDY) are enriched in basic and acidic residues.

It localises to the nucleus. Its function is as follows. BrlA, abaA and wetA are pivotal regulators of conidiophore development and conidium maturation. They act individually and together to regulate their own expression and that of numerous other sporulation-specific genes. BrlA, abaA and wetA act together to positively regulate the expression of the Pks1 gene cluster that mediates the biosynthesis of an anthraquinone derivative pigment that contributes to conidial pigmentation that provides protection from UV radiation, heat and cold stress. The chain is C2H2 type master regulator of conidiophore development BrlA from Metarhizium robertsii (strain ARSEF 23 / ATCC MYA-3075) (Metarhizium anisopliae (strain ARSEF 23)).